The sequence spans 318 residues: MLLKMEEMVIEKKNEMKQTGDFVSGVSKNGEYETAVALEKQEDLKTTSKSLIELEEEKQSKEKQLKSELLKKKLEERPKLDNLEDLQTIINLKKRKRVKKVKVPVVKEPEPEETIGDVDQMTFFKAALDNKMSIIEKYLADGGDPNTCDEYKRTALHRACSEGHTAIVEKLIEAGANIEFKDMLESTALHWTCRGGSVETLKLLLNKGAAINARDKLLSTPLHVAVRTGYYECGEHLIACEADLNAKDREGDTPMHDGVRLNRYKMIRLLILYGVNLNIKNCAGKTPMELVMQWQNGAKEIFNGLQNKSYKNSHISKF.

Residues 37–77 adopt a coiled-coil conformation; it reads ALEKQEDLKTTSKSLIELEEEKQSKEKQLKSELLKKKLEER. 5 ANK repeats span residues 151-180, 184-213, 217-246, 250-279, and 283-314; these read YKRTALHRACSEGHTAIVEKLIEAGANIEF, LESTALHWTCRGGSVETLKLLLNKGAAINA, LLSTPLHVAVRTGYYECGEHLIACEADLNA, EGDTPMHDGVRLNRYKMIRLLILYGVNLNI, and AGKTPMELVMQWQNGAKEIFNGLQNKSYKNSH.

It localises to the nucleus. In terms of biological role, may act as a nuclear transcription factor that negatively regulates the expression of cardiac genes. This Xenopus laevis (African clawed frog) protein is Ankyrin repeat domain-containing protein 1 (ankrd1).